Here is a 174-residue protein sequence, read N- to C-terminus: Repair DNA polymerase X (174 aa).

The segment at 42–51 (REEKMLNDVD) is involved in ssDNA binding. Positions 49 and 51 each coordinate Mg(2+). Residues cysteine 81 and cysteine 86 are joined by a disulfide bond. Aspartate 100 lines the Mg(2+) pocket.

It belongs to the DNA polymerase type-X family. It depends on Mg(2+) as a cofactor.

It is found in the virion. It catalyses the reaction DNA(n) + a 2'-deoxyribonucleoside 5'-triphosphate = DNA(n+1) + diphosphate. Functionally, error-prone polymerase lacking a proofreading 3'-5' exonuclease which catalyzes the gap-filling reaction during the DNA repair process. Specifically binds intermediates in the single-nucleotide base-excision repair process. Also catalyzes DNA polymerization with low nucleotide-insertion fidelity. Probably acts as a strategic DNA mutase, which gives rise to a rapid emergence of variants. Generates mismatched G-G pairs, in that case, the polymerase first binds the deoxynucleotide followed by mismatch formation. Together with the viral DNA ligase, fills the single nucleotide gaps generated by the AP endonuclease. Binds DNA with high affinity via the helix alphaE. The chain is Repair DNA polymerase X from Ornithodoros (relapsing fever ticks).